A 192-amino-acid polypeptide reads, in one-letter code: Glycerol-3-phosphate acyltransferase (192 aa).

5 helical membrane passes run 4 to 24 (MFWL…AILL), 54 to 74 (LAVL…VLAG), 80 to 100 (PSQQ…PLYF), 112 to 132 (AGVL…AWLL), and 154 to 174 (LLAW…LLIV).

It belongs to the PlsY family. Probably interacts with PlsX.

Its subcellular location is the cell inner membrane. The catalysed reaction is an acyl phosphate + sn-glycerol 3-phosphate = a 1-acyl-sn-glycero-3-phosphate + phosphate. The protein operates within lipid metabolism; phospholipid metabolism. In terms of biological role, catalyzes the transfer of an acyl group from acyl-phosphate (acyl-PO(4)) to glycerol-3-phosphate (G3P) to form lysophosphatidic acid (LPA). This enzyme utilizes acyl-phosphate as fatty acyl donor, but not acyl-CoA or acyl-ACP. This is Glycerol-3-phosphate acyltransferase from Pseudomonas syringae pv. tomato (strain ATCC BAA-871 / DC3000).